A 727-amino-acid polypeptide reads, in one-letter code: E3 SUMO-protein ligase pli1 (727 aa).

In terms of domain architecture, SAP spans 18–52; that stretch reads ETGLIIPQLKDILRVFGLRLSGTKAELITRIKQLI. The PINIT domain maps to 108-261; that stretch reads YSRPFAPVVH…SVVVCFVKVY (154 aa). An SP-RING-type zinc finger spans residues 290-371; sequence QDADIIATST…MQHILESTPS (82 aa). The Zn(2+) site is built by cysteine 321, histidine 323, cysteine 344, and cysteine 347. Residues serine 395 and serine 396 each carry the phosphoserine modification. 2 disordered regions span residues 408–558 and 706–727; these read ELSD…TQHS and QSNN…QSID. Polar residues-rich tracts occupy residues 417-435 and 459-494; these read TMAN…THNS and VATS…NRST. The span at 546–558 shows a compositional bias: low complexity; that stretch reads SQQNNNNSNTQHS.

It belongs to the PIAS family. In terms of assembly, interacts with hus5/ubc9.

It is found in the nucleus. Its pathway is protein modification; protein sumoylation. Functionally, acts as an E3 ligase mediating SUMO/Smt3 attachment to other proteins. Involved in the maintenance of the centromere and in telomere length. Regulates recombination, via extension sumoylation, particularly within the heterochromatin repeats. The sequence is that of E3 SUMO-protein ligase pli1 (pli1) from Schizosaccharomyces pombe (strain 972 / ATCC 24843) (Fission yeast).